The chain runs to 637 residues: 1-deoxy-D-xylulose-5-phosphate synthase 1 (637 aa).

Thiamine diphosphate is bound by residues His74 and 115–117; that span reads GHS. Asp146 provides a ligand contact to Mg(2+). Thiamine diphosphate-binding positions include 147–148, Asn175, Tyr286, and Glu368; that span reads GS. Asn175 lines the Mg(2+) pocket.

Belongs to the transketolase family. DXPS subfamily. As to quaternary structure, homodimer. Mg(2+) is required as a cofactor. It depends on thiamine diphosphate as a cofactor.

The enzyme catalyses D-glyceraldehyde 3-phosphate + pyruvate + H(+) = 1-deoxy-D-xylulose 5-phosphate + CO2. It functions in the pathway metabolic intermediate biosynthesis; 1-deoxy-D-xylulose 5-phosphate biosynthesis; 1-deoxy-D-xylulose 5-phosphate from D-glyceraldehyde 3-phosphate and pyruvate: step 1/1. Catalyzes the acyloin condensation reaction between C atoms 2 and 3 of pyruvate and glyceraldehyde 3-phosphate to yield 1-deoxy-D-xylulose-5-phosphate (DXP). This is 1-deoxy-D-xylulose-5-phosphate synthase 1 from Geobacter sulfurreducens (strain ATCC 51573 / DSM 12127 / PCA).